Here is a 287-residue protein sequence, read N- to C-terminus: Protease HtpX (287 aa).

The next 2 membrane-spanning stretches (helical) occupy residues 4–24 (IFLLIATNLAVLLVASIVMSI) and 33–53 (GGLLVFAAIFGFGGAFISLAI). His139 is a binding site for Zn(2+). The active site involves Glu140. Residue His143 coordinates Zn(2+). 2 consecutive transmembrane segments (helical) span residues 154–174 (LIQGVVNTFVIFAARVVAGII) and 195–215 (AVVFVLDMLFGILASIIVAYF). Residue Glu220 coordinates Zn(2+).

Belongs to the peptidase M48B family. The cofactor is Zn(2+).

Its subcellular location is the cell inner membrane. This Shewanella baltica (strain OS223) protein is Protease HtpX.